The following is a 632-amino-acid chain: Extracellular metalloproteinase 2 (632 aa).

An N-terminal signal peptide occupies residues 1-19; the sequence is MHGLLLAGLAAALPLGVAG. A propeptide spanning residues 20–244 is cleaved from the precursor; that stretch reads LPARQQSGLS…VHNVVDYVAS (225 aa). N270 carries an N-linked (GlcNAc...) asparagine glycan. A Zn(2+)-binding site is contributed by H429. E430 is an active-site residue. H433 is a Zn(2+) binding site.

Belongs to the peptidase M36 family. Requires Zn(2+) as cofactor.

The protein localises to the secreted. Secreted metalloproteinase probably acting as a virulence factor. This is Extracellular metalloproteinase 2 (MEP2) from Trichophyton rubrum (Athlete's foot fungus).